The sequence spans 1311 residues: Nephrocystin-3 (1311 aa).

Residues 81-183 are a coiled coil; the sequence is SKNNEIASMQ…LQRLQAQGIQ (103 aa). 9 TPR repeats span residues 889–923, 927–960, 969–1002, 1011–1044, 1077–1110, 1119–1152, 1161–1194, 1203–1236, and 1245–1278; these read LSYW…EEKM, ADLY…RETA, AQSL…SENA, AREL…RQKS, ARTL…RERV, AQSI…RRRA, AYTV…RQKS, ATAL…YEDS, and GETL…KETE.

It is found in the cell projection. It localises to the cilium. Its function is as follows. Required for normal ciliary development and function. Inhibits disheveled-1-induced canonical Wnt-signaling activity and may also play a role in the control of non-canonical Wnt signaling that regulates planar cell polarity. Probably acts as a molecular switch between different Wnt signaling pathways. Required for proper convergent extension cell movements. This chain is Nephrocystin-3 (nphp3), found in Xenopus tropicalis (Western clawed frog).